The chain runs to 278 residues: HTH-type transcriptional activator RhaS (278 aa).

Residues 174–272 (NQLMAWLEDH…NWSPRDIRQG (99 aa)) enclose the HTH araC/xylS-type domain. 2 DNA-binding regions (H-T-H motif) span residues 191-212 (EAVA…KQHT) and 239-262 (VTEI…RREF).

In terms of assembly, binds DNA as a dimer.

The protein resides in the cytoplasm. Its function is as follows. Activates expression of the rhaBAD and rhaT operons. This Salmonella arizonae (strain ATCC BAA-731 / CDC346-86 / RSK2980) protein is HTH-type transcriptional activator RhaS.